A 553-amino-acid chain; its full sequence is MPVQLTTALRVVGTSLFALAVLGGILAAYVTGYQFIHTEKHYLSFGLYGAILGLHLLIQSLFAFLEHRRMRRAGQALKLPSPRRGSVALCIAAYQEDPDYLRKCLRSAQRISFPDLKVVMVVDGNRQEDAYMLDIFHEVLGGTEQAGFFVWRSNFHEAGEGETEASLQEGMDRVRDVVRASTFSCIMQKWGGKREVMYTAFKALGDSVDYIQVCDSDTVLDPACTIEMLRVLEEDPQVGGVGGDVQILNKYDSWISFLSSVRYWMAFNVERACQSYFGCVQCISGPLGMYRNSLLQQFLEDWYHQKFLGSKCSFGDDRHLTNRVLSLGYRTKYTARSKCLTETPTKYLRWLNQQTRWSKSYFREWLYNSLWFHKHHLWMTYESVVTGFFPFFLIATVIQLFYRGRIWNILLFLLTVQLVGIIKATYACFLRGNAEMIFMSLYSLLYMSSLLPAKIFAIATINKSGWGTSGRKTIVVNFIGLIPVSIWVAVLLGGLAYTAYCQDLFSETELAFLVSGAILYGCYWVALLMLYLAIIARRCGKKPEQYSLAFAEV.

Topologically, residues Met1 to Ser15 are cytoplasmic. The helical transmembrane segment at Leu16–Ile36 threads the bilayer. Residues His37–Ser44 lie on the Extracellular side of the membrane. Residues Phe45–Leu65 traverse the membrane as a helical segment. At Glu66–Leu377 the chain is on the cytoplasmic side. A helical membrane pass occupies residues Trp378–Ile398. Over Gln399 to Asn408 the chain is Extracellular. Residues Ile409–Phe429 traverse the membrane as a helical segment. Residues Leu430 to Ser440 are Cytoplasmic-facing. The chain crosses the membrane as a helical span at residues Leu441 to Ile461. A glycan (N-linked (GlcNAc...) asparagine) is linked at Asn462. Residues Asn462–Thr473 lie on the Extracellular side of the membrane. A helical transmembrane segment spans residues Ile474–Gly494. Residues Leu495 to Ser515 lie on the Cytoplasmic side of the membrane. The chain crosses the membrane as a helical span at residues Gly516–Ala536. At Arg537–Val553 the chain is on the extracellular side.

The protein belongs to the NodC/HAS family. As to quaternary structure, homodimers. Forms heterodimers with HAS2 and HAS1. The cofactor is Mg(2+). Post-translationally, O-GlcNAcylation increases the hyaluronan synthase activity, HAS3 stability and its plasma membrane residence. The concentration of UDP-GlcNAc controls the level of O-GlcNAc modification.

The protein localises to the cell membrane. The protein resides in the golgi apparatus membrane. It is found in the golgi apparatus. It localises to the trans-Golgi network membrane. Its subcellular location is the early endosome. It carries out the reaction [hyaluronan](n) + UDP-N-acetyl-alpha-D-glucosamine = N-acetyl-beta-D-glucosaminyl-(1-&gt;4)-[hyaluronan](n) + UDP + H(+). The catalysed reaction is N-acetyl-beta-D-glucosaminyl-(1-&gt;4)-[hyaluronan](n) + UDP-alpha-D-glucuronate = [hyaluronan](n+1) + UDP + H(+). Its pathway is glycan biosynthesis; hyaluronan biosynthesis. Its activity is regulated as follows. The enzymatic activity depends on the availability of cytosolic levels of UDP-GlcUA and UDP-GlcNAc. Functionally, catalyzes the addition of GlcNAc or GlcUA monosaccharides to the nascent hyaluronan polymer. Therefore, it is essential to hyaluronan synthesis a major component of most extracellular matrices that has a structural role in tissues architectures and regulates cell adhesion, migration and differentiation. This is one of three isoenzymes responsible for cellular hyaluronan synthesis. This Homo sapiens (Human) protein is Hyaluronan synthase 3.